Reading from the N-terminus, the 278-residue chain is Putative ABC transporter ATP-binding protein MJ1572 (278 aa).

Residues 5 to 242 form the ABC transporter domain; it reads YRLVDVSYKY…LDELNLDVPE (238 aa). 38–45 contributes to the ATP binding site; that stretch reads GPNGAGKT.

This sequence belongs to the ABC transporter superfamily.

The protein localises to the cell membrane. Probably part of an ABC transporter complex. Responsible for energy coupling to the transport system. This chain is Putative ABC transporter ATP-binding protein MJ1572, found in Methanocaldococcus jannaschii (strain ATCC 43067 / DSM 2661 / JAL-1 / JCM 10045 / NBRC 100440) (Methanococcus jannaschii).